An 862-amino-acid chain; its full sequence is Squamosa promoter-binding-like protein 1 (862 aa).

A disordered region spans residues 55-98 (KRRRVSPEDDDGEECINAATTNGDDGQISGQRGRSSEDEMPRQG). Positions 72–87 (AATTNGDDGQISGQRG) are enriched in polar residues. An SBP-type zinc finger spans residues 104-181 (GPCCQVDGCT…AQHNRRRRKV (78 aa)). Positions 107, 112, 129, 132, 148, 151, 155, and 167 each coordinate Zn(2+). The Bipartite nuclear localization signal motif lies at 164–180 (KKSCRSRLAQHNRRRRK).

In terms of tissue distribution, ubiquitous.

Its subcellular location is the nucleus. In terms of biological role, trans-acting factor that binds specifically to the consensus nucleotide sequence 5'-TNCGTACAA-3'. The protein is Squamosa promoter-binding-like protein 1 (SPL1) of Oryza sativa subsp. japonica (Rice).